We begin with the raw amino-acid sequence, 337 residues long: Inositol 2-dehydrogenase (337 aa).

Belongs to the Gfo/Idh/MocA family. As to quaternary structure, homotetramer.

The catalysed reaction is myo-inositol + NAD(+) = scyllo-inosose + NADH + H(+). Involved in the oxidation of myo-inositol (MI) to 2-keto-myo-inositol (2KMI or 2-inosose). This chain is Inositol 2-dehydrogenase, found in Serratia proteamaculans (strain 568).